Reading from the N-terminus, the 338-residue chain is D-erythrose-4-phosphate dehydrogenase (338 aa).

11 to 12 (RI) lines the NAD(+) pocket. Residues 153 to 155 (SCT), Arg-199, 212 to 213 (TK), and Arg-235 each bind substrate. Catalysis depends on Cys-154, which acts as the Nucleophile. Asn-317 is a binding site for NAD(+).

The protein belongs to the glyceraldehyde-3-phosphate dehydrogenase family. Epd subfamily. In terms of assembly, homotetramer.

The protein localises to the cytoplasm. The enzyme catalyses D-erythrose 4-phosphate + NAD(+) + H2O = 4-phospho-D-erythronate + NADH + 2 H(+). It participates in cofactor biosynthesis; pyridoxine 5'-phosphate biosynthesis; pyridoxine 5'-phosphate from D-erythrose 4-phosphate: step 1/5. Functionally, catalyzes the NAD-dependent conversion of D-erythrose 4-phosphate to 4-phosphoerythronate. The polypeptide is D-erythrose-4-phosphate dehydrogenase (Shewanella putrefaciens (strain CN-32 / ATCC BAA-453)).